We begin with the raw amino-acid sequence, 316 residues long: Nucleotide-binding protein NFA_35930 (316 aa).

32 to 39 (GLSGAGRG) contacts ATP. Position 83 to 86 (83 to 86 (DVRS)) interacts with GTP.

This sequence belongs to the RapZ-like family.

Its function is as follows. Displays ATPase and GTPase activities. This is Nucleotide-binding protein NFA_35930 from Nocardia farcinica (strain IFM 10152).